A 951-amino-acid chain; its full sequence is 5'-3' exoribonuclease 2 (951 aa).

The segment at 262-278 (PCALCNQFGHEVKDCEG) adopts a CCHC-type zinc-finger fold. Lys286 carries the post-translational modification N6-acetyllysine. The disordered stretch occupies residues 408-508 (KDDEDSFRRR…SDSEPEPEDN (101 aa)). Positions 416–426 (RRQKEKRKRMK) are enriched in basic residues. Residue Thr439 is modified to Phosphothreonine. Composition is skewed to polar residues over residues 445 to 458 (SRNS…SNPR) and 467 to 485 (QRNS…SDGS). Residues Ser448, Ser471, Ser473, Ser475, Ser482, Ser487, Ser499, Ser501, and Ser678 each carry the phosphoserine modification. An asymmetric dimethylarginine; alternate mark is found at Arg824, Arg847, and Arg851. Arg824, Arg847, and Arg851 each carry omega-N-methylarginine; alternate. An Asymmetric dimethylarginine modification is found at Arg880. An Asymmetric dimethylarginine; alternate modification is found at Arg883. An Omega-N-methylarginine; alternate modification is found at Arg883. Arg895 is modified (omega-N-methylarginine). The interval 907–951 (NQYQMLGGPGGYPPRRDDHRGGRQGYPREGRKYPLPPPSGRYSWN) is disordered. Residues 920–938 (PRRDDHRGGRQGYPREGRK) show a composition bias toward basic and acidic residues. Residue Arg947 is modified to Asymmetric dimethylarginine; alternate. The residue at position 947 (Arg947) is an Omega-N-methylarginine; alternate.

The protein belongs to the 5'-3' exonuclease family. XRN2/RAT1 subfamily. In terms of assembly, interacts with POLR2A and SMN1/SMN2. Interacts with CDKN2AIP and NKRF. Interacts with CDKN2AIPNL; the interaction is direct. Interacts with TRIM71 (via NHL repeats) in an RNA-dependent manner. Interacts with DHX34; the interaction is RNA-independent. Expressed in the spleen, testis, heart, brain, lung, liver, skeletal muscle, and kidney.

Its subcellular location is the nucleus. The protein localises to the nucleolus. Possesses 5'-&gt;3' exoribonuclease activity. May promote the termination of transcription by RNA polymerase II. During transcription termination, cleavage at the polyadenylation site liberates a 5' fragment which is subsequently processed to form the mature mRNA and a 3' fragment which remains attached to the elongating polymerase. The processive degradation of this 3' fragment by this protein may promote termination of transcription. Binds to RNA polymerase II (RNAp II) transcription termination R-loops formed by G-rich pause sites. The polypeptide is 5'-3' exoribonuclease 2 (Xrn2) (Mus musculus (Mouse)).